Reading from the N-terminus, the 223-residue chain is Ribonuclease T (223 aa).

A compositionally biased stretch (acidic residues) spans 1–11 (MSDDHFDDEQE). The disordered stretch occupies residues 1 to 21 (MSDDHFDDEQEGSSGGPRHPM). The Exonuclease domain maps to 31-205 (VVVDVETGGF…YDTEKTAELF (175 aa)). Mg(2+) contacts are provided by D34, E36, H192, and D197. H192 serves as the catalytic Proton donor/acceptor.

It belongs to the RNase T family. Homodimer. Mg(2+) serves as cofactor.

Trims short 3' overhangs of a variety of RNA species, leaving a one or two nucleotide 3' overhang. Responsible for the end-turnover of tRNA: specifically removes the terminal AMP residue from uncharged tRNA (tRNA-C-C-A). Also appears to be involved in tRNA biosynthesis. This chain is Ribonuclease T, found in Pseudomonas fluorescens (strain ATCC BAA-477 / NRRL B-23932 / Pf-5).